The chain runs to 92 residues: Small ribosomal subunit protein uS19 (92 aa).

Belongs to the universal ribosomal protein uS19 family.

In terms of biological role, protein S19 forms a complex with S13 that binds strongly to the 16S ribosomal RNA. The polypeptide is Small ribosomal subunit protein uS19 (Parvibaculum lavamentivorans (strain DS-1 / DSM 13023 / NCIMB 13966)).